Reading from the N-terminus, the 299-residue chain is Fibrinogen silencer-binding protein (299 aa).

Lysine 94 is covalently cross-linked (Glycyl lysine isopeptide (Lys-Gly) (interchain with G-Cter in SUMO2)).

In terms of assembly, interacts with APBA1 (via PDZ 1 and 2 domains). As to expression, expressed in multiple tissues including brain.

The protein resides in the nucleus. In terms of biological role, transcriptional repressor that down-regulates the expression of the fibrinogen gamma chain. Represses transcription of GSK3B gene promoter via its interaction with APBA1. In Homo sapiens (Human), this protein is Fibrinogen silencer-binding protein (FSBP).